A 200-amino-acid chain; its full sequence is Holliday junction branch migration complex subunit RuvA (200 aa).

Residues 1–65 form a domain I region; sequence MYEYIKGTLT…ETEHVLYGFS (65 aa). The segment at 66 to 144 is domain II; it reads SRAERECFRL…TLMPLYLEEP (79 aa). The flexible linker stretch occupies residues 145–149; it reads VVPSS. The domain III stretch occupies residues 150 to 200; the sequence is TANSSFKEGIGALMNLGFSRLAADRMMTEAVKELSEEASVAELLPIALRKS.

The protein belongs to the RuvA family. In terms of assembly, homotetramer. Forms an RuvA(8)-RuvB(12)-Holliday junction (HJ) complex. HJ DNA is sandwiched between 2 RuvA tetramers; dsDNA enters through RuvA and exits via RuvB. An RuvB hexamer assembles on each DNA strand where it exits the tetramer. Each RuvB hexamer is contacted by two RuvA subunits (via domain III) on 2 adjacent RuvB subunits; this complex drives branch migration. In the full resolvosome a probable DNA-RuvA(4)-RuvB(12)-RuvC(2) complex forms which resolves the HJ.

Its subcellular location is the cytoplasm. Its function is as follows. The RuvA-RuvB-RuvC complex processes Holliday junction (HJ) DNA during genetic recombination and DNA repair, while the RuvA-RuvB complex plays an important role in the rescue of blocked DNA replication forks via replication fork reversal (RFR). RuvA specifically binds to HJ cruciform DNA, conferring on it an open structure. The RuvB hexamer acts as an ATP-dependent pump, pulling dsDNA into and through the RuvAB complex. HJ branch migration allows RuvC to scan DNA until it finds its consensus sequence, where it cleaves and resolves the cruciform DNA. This chain is Holliday junction branch migration complex subunit RuvA, found in Chlamydia trachomatis serovar D (strain ATCC VR-885 / DSM 19411 / UW-3/Cx).